Consider the following 477-residue polypeptide: MNSIDLSRVHMIGIGGAGMSGVARILLSCGSVVSGSDVKESRPVAALRAMGATIAVGHKAENLAISGSMPTVVVTSFAAIPQDNPELQEARANNIPVIRRSDLLGELMEDHQQVLIAGTHGKTSTTSMAVVALQAAGKDPSFAIGGQLNKAGTNAHDGTGKAFVAEADESDASLLRYKPDIAVVTNIEPDHLDFFKTSEAYFKVFDDFAERVQPGGTLVVCLDDPHAAALGEKFKDRMTVRGYGSPAAAQQYPDVAFTVVEHMEVGPAGTRARITVGDDTVDVIMRIPGHHMVLNACAALTAGVTAGAELERLAAGISDFSGVRRRFEFHGRVSGGAFHDAEVYDDYAHHPTEVTAVLKAARQQQEARGIGRVVVAFQPHLYSRTMEFAAEFAEALSLADHAVILDIFGAREQPVEGVDSRIISDKMTIPVVFEPNFSAVAAQVKKIAQPNDIIVTMGAGSVTLLADEILTALRESE.

Residue 118–124 (GTHGKTS) coordinates ATP.

It belongs to the MurCDEF family.

Its subcellular location is the cytoplasm. It carries out the reaction UDP-N-acetyl-alpha-D-muramate + L-alanine + ATP = UDP-N-acetyl-alpha-D-muramoyl-L-alanine + ADP + phosphate + H(+). It functions in the pathway cell wall biogenesis; peptidoglycan biosynthesis. Its function is as follows. Cell wall formation. The chain is UDP-N-acetylmuramate--L-alanine ligase from Corynebacterium diphtheriae (strain ATCC 700971 / NCTC 13129 / Biotype gravis).